We begin with the raw amino-acid sequence, 367 residues long: Glutamate 5-kinase (367 aa).

Lys8 provides a ligand contact to ATP. 3 residues coordinate substrate: Ser49, Asp136, and Asn148. Residues 168–169 (TD) and 210–216 (TGGMATK) contribute to the ATP site. Residues 275 to 353 (TGKLYLDRGA…EEIPTILGYS (79 aa)) form the PUA domain.

It belongs to the glutamate 5-kinase family.

Its subcellular location is the cytoplasm. The enzyme catalyses L-glutamate + ATP = L-glutamyl 5-phosphate + ADP. It participates in amino-acid biosynthesis; L-proline biosynthesis; L-glutamate 5-semialdehyde from L-glutamate: step 1/2. Functionally, catalyzes the transfer of a phosphate group to glutamate to form L-glutamate 5-phosphate. The sequence is that of Glutamate 5-kinase from Cyanothece sp. (strain PCC 7425 / ATCC 29141).